The sequence spans 58 residues: Large ribosomal subunit protein uL30 (58 aa).

It belongs to the universal ribosomal protein uL30 family. As to quaternary structure, part of the 50S ribosomal subunit.

In Vibrio campbellii (strain ATCC BAA-1116), this protein is Large ribosomal subunit protein uL30.